The chain runs to 397 residues: Elongation factor Tu (397 aa).

In terms of domain architecture, tr-type G spans 10 to 207 (KPHVNIGTIG…AVDTYIEEPK (198 aa)). Residues 19–26 (GHVDHGKT) form a G1 region. GTP is bound at residue 19-26 (GHVDHGKT). Residue Thr26 coordinates Mg(2+). Residues 60–64 (GITIN) form a G2 region. A G3 region spans residues 81–84 (DCPG). Residues 81–85 (DCPGH) and 136–139 (NKID) each bind GTP. Residues 136 to 139 (NKID) form a G4 region. The G5 stretch occupies residues 177 to 179 (SAL).

This sequence belongs to the TRAFAC class translation factor GTPase superfamily. Classic translation factor GTPase family. EF-Tu/EF-1A subfamily. In terms of assembly, monomer.

It localises to the cytoplasm. It carries out the reaction GTP + H2O = GDP + phosphate + H(+). GTP hydrolase that promotes the GTP-dependent binding of aminoacyl-tRNA to the A-site of ribosomes during protein biosynthesis. In Metamycoplasma hominis (strain ATCC 23114 / DSM 25592 / NBRC 14850 / NCTC 10111 / PG21) (Mycoplasma hominis), this protein is Elongation factor Tu.